The sequence spans 159 residues: Cystatin-9 (159 aa).

Residues 1–28 form the signal peptide; the sequence is MSSPQRRKAMPWALSLLLMGFQLLVTYA.

This sequence belongs to the cystatin family. Expressed in heart, placenta, lung, liver, skeletal muscle and pancreas. Not expressed in brain. Expressed in epididymis, kidney, testis, spinal cord, and thymus with a strong expression in epididymis and kidney and a weak expression in the spinal cord and thymus.

Its subcellular location is the secreted. May be involved in testis development. May play a role in hematopoietic differentiation or inflammation. Has immunomodulatory and antimicrobial functions against Francisella tularensis, a Gram-negative bacteria. The sequence is that of Cystatin-9 (CST9) from Homo sapiens (Human).